Consider the following 355-residue polypeptide: Meiotic coiled-coil protein 4 (355 aa).

Positions 298–338 form a coiled coil; that stretch reads QRLSRTEINKEIIEIEKLELEVVQFQMSIANLINTQVEVTN.

It is found in the cytoplasm. Has a role in meiosis. The protein is Meiotic coiled-coil protein 4 (mcp4) of Schizosaccharomyces pombe (strain 972 / ATCC 24843) (Fission yeast).